An 85-amino-acid polypeptide reads, in one-letter code: U4-theraphotoxin-Hhn1a (85 aa).

The signal sequence occupies residues 1–22; that stretch reads MKVTLIAILTCAAVLVLHTTAA. Positions 23–48 are excised as a propeptide; sequence EELEAESQLMEVGMPDTELAAVDEER. 3 disulfide bridges follow: cysteine 52–cysteine 66, cysteine 56–cysteine 77, and cysteine 71–cysteine 82.

This sequence belongs to the neurotoxin 12 (Hwtx-2) family. 02 (Hwtx-2) subfamily. In terms of assembly, monomer. Expressed by the venom gland.

The protein localises to the secreted. Its function is as follows. Neurotoxin active on both insects and mammals. The polypeptide is U4-theraphotoxin-Hhn1a (Cyriopagopus hainanus (Chinese bird spider)).